We begin with the raw amino-acid sequence, 141 residues long: Hemoglobin subunit alpha (141 aa).

The Globin domain occupies 1–141 (VLSAKDKTNI…VSTVLTSKYR (141 aa)). At S3 the chain carries Phosphoserine. Position 7 is an N6-succinyllysine (K7). Position 8 is a phosphothreonine (T8). Position 16 is an N6-acetyllysine; alternate (K16). K16 is subject to N6-succinyllysine; alternate. Y24 bears the Phosphotyrosine mark. At K40 the chain carries N6-succinyllysine. S49 bears the Phosphoserine mark. O2 is bound at residue H58. Residue H87 participates in heme b binding. S102 bears the Phosphoserine mark. Position 108 is a phosphothreonine (T108). Residues S124 and S131 each carry the phosphoserine modification. Phosphothreonine occurs at positions 134 and 137. S138 carries the phosphoserine modification.

Belongs to the globin family. As to quaternary structure, heterotetramer of two alpha chains and two beta chains. In terms of tissue distribution, red blood cells.

Functionally, involved in oxygen transport from the lung to the various peripheral tissues. Hemopressin acts as an antagonist peptide of the cannabinoid receptor CNR1. Hemopressin-binding efficiently blocks cannabinoid receptor CNR1 and subsequent signaling. This Mesocricetus auratus (Golden hamster) protein is Hemoglobin subunit alpha (HBA).